An 86-amino-acid chain; its full sequence is Large ribosomal subunit protein bL27 (86 aa).

A disordered region spans residues Met-1–Leu-21.

Belongs to the bacterial ribosomal protein bL27 family.

The polypeptide is Large ribosomal subunit protein bL27 (Hahella chejuensis (strain KCTC 2396)).